We begin with the raw amino-acid sequence, 196 residues long: Glycerol-3-phosphate acyltransferase (196 aa).

The next 5 helical transmembrane spans lie at 4–24, 56–76, 80–100, 114–134, and 155–175; these read LTLT…AILV, ATVL…AYFL, SLYL…PIFF, TLLP…VLVV, and VYFL…LILF.

Belongs to the PlsY family. Probably interacts with PlsX.

Its subcellular location is the cell inner membrane. It catalyses the reaction an acyl phosphate + sn-glycerol 3-phosphate = a 1-acyl-sn-glycero-3-phosphate + phosphate. It functions in the pathway lipid metabolism; phospholipid metabolism. In terms of biological role, catalyzes the transfer of an acyl group from acyl-phosphate (acyl-PO(4)) to glycerol-3-phosphate (G3P) to form lysophosphatidic acid (LPA). This enzyme utilizes acyl-phosphate as fatty acyl donor, but not acyl-CoA or acyl-ACP. This chain is Glycerol-3-phosphate acyltransferase, found in Colwellia psychrerythraea (strain 34H / ATCC BAA-681) (Vibrio psychroerythus).